A 294-amino-acid chain; its full sequence is Elongation factor Ts (294 aa).

An involved in Mg(2+) ion dislocation from EF-Tu region spans residues 81–84 (TDFV).

It belongs to the EF-Ts family.

The protein localises to the cytoplasm. In terms of biological role, associates with the EF-Tu.GDP complex and induces the exchange of GDP to GTP. It remains bound to the aminoacyl-tRNA.EF-Tu.GTP complex up to the GTP hydrolysis stage on the ribosome. The sequence is that of Elongation factor Ts from Hydrogenovibrio crunogenus (strain DSM 25203 / XCL-2) (Thiomicrospira crunogena).